A 477-amino-acid polypeptide reads, in one-letter code: Aspartyl/glutamyl-tRNA(Asn/Gln) amidotransferase subunit B (477 aa).

It belongs to the GatB/GatE family. GatB subfamily. As to quaternary structure, heterotrimer of A, B and C subunits.

It catalyses the reaction L-glutamyl-tRNA(Gln) + L-glutamine + ATP + H2O = L-glutaminyl-tRNA(Gln) + L-glutamate + ADP + phosphate + H(+). It carries out the reaction L-aspartyl-tRNA(Asn) + L-glutamine + ATP + H2O = L-asparaginyl-tRNA(Asn) + L-glutamate + ADP + phosphate + 2 H(+). Its function is as follows. Allows the formation of correctly charged Asn-tRNA(Asn) or Gln-tRNA(Gln) through the transamidation of misacylated Asp-tRNA(Asn) or Glu-tRNA(Gln) in organisms which lack either or both of asparaginyl-tRNA or glutaminyl-tRNA synthetases. The reaction takes place in the presence of glutamine and ATP through an activated phospho-Asp-tRNA(Asn) or phospho-Glu-tRNA(Gln). This chain is Aspartyl/glutamyl-tRNA(Asn/Gln) amidotransferase subunit B, found in Bdellovibrio bacteriovorus (strain ATCC 15356 / DSM 50701 / NCIMB 9529 / HD100).